A 132-amino-acid chain; its full sequence is Small ribosomal subunit protein uS8c (132 aa).

This sequence belongs to the universal ribosomal protein uS8 family. Part of the 30S ribosomal subunit.

The protein resides in the plastid. It is found in the chloroplast. Functionally, one of the primary rRNA binding proteins, it binds directly to 16S rRNA central domain where it helps coordinate assembly of the platform of the 30S subunit. The polypeptide is Small ribosomal subunit protein uS8c (rps8) (Nymphaea alba (White water-lily)).